The following is a 374-amino-acid chain: Copper-containing nitrite reductase (374 aa).

The segment at residues 1 to 31 is a signal peptide (tat-type signal); sequence MFTRRAALVGAAALASAPLVIRTAGAEEAPA. Plastocyanin-like domains are found at residues 93–189 and 254–355; these read MTFD…IMVL and GAVG…VLVE. The Cu cation site is built by His126, His131, His166, Cys167, His177, Met182, and His338.

It belongs to the multicopper oxidase family. Homotrimer. Requires Cu(2+) as cofactor. It depends on Cu(+) as a cofactor. FAD is required as a cofactor. Post-translationally, predicted to be exported by the Tat system. The position of the signal peptide cleavage has not been experimentally proven.

It localises to the periplasm. The catalysed reaction is nitric oxide + Fe(III)-[cytochrome c] + H2O = Fe(II)-[cytochrome c] + nitrite + 2 H(+). Its pathway is nitrogen metabolism; nitrate reduction (denitrification); dinitrogen from nitrate: step 2/4. The chain is Copper-containing nitrite reductase (nirK) from Cereibacter sphaeroides (strain ATCC 17025 / ATH 2.4.3) (Rhodobacter sphaeroides).